The primary structure comprises 172 residues: Adenine phosphoribosyltransferase (172 aa).

It belongs to the purine/pyrimidine phosphoribosyltransferase family. In terms of assembly, homodimer.

The protein localises to the cytoplasm. The enzyme catalyses AMP + diphosphate = 5-phospho-alpha-D-ribose 1-diphosphate + adenine. The protein operates within purine metabolism; AMP biosynthesis via salvage pathway; AMP from adenine: step 1/1. Catalyzes a salvage reaction resulting in the formation of AMP, that is energically less costly than de novo synthesis. The polypeptide is Adenine phosphoribosyltransferase (Streptococcus uberis (strain ATCC BAA-854 / 0140J)).